The sequence spans 444 residues: Signal recognition particle 54 kDa protein (444 aa).

GTP is bound by residues 102 to 109 (GVQGSGKT), 184 to 188 (DTAGR), and 244 to 247 (SKMD).

It belongs to the GTP-binding SRP family. SRP54 subfamily. Part of the signal recognition particle protein translocation system, which is composed of SRP and FtsY. Archaeal SRP consists of a 7S RNA molecule of 300 nucleotides and two protein subunits: SRP54 and SRP19.

Its subcellular location is the cytoplasm. It catalyses the reaction GTP + H2O = GDP + phosphate + H(+). Involved in targeting and insertion of nascent membrane proteins into the cytoplasmic membrane. Binds to the hydrophobic signal sequence of the ribosome-nascent chain (RNC) as it emerges from the ribosomes. The SRP-RNC complex is then targeted to the cytoplasmic membrane where it interacts with the SRP receptor FtsY. The protein is Signal recognition particle 54 kDa protein of Sulfolobus acidocaldarius (strain ATCC 33909 / DSM 639 / JCM 8929 / NBRC 15157 / NCIMB 11770).